Reading from the N-terminus, the 233-residue chain is uncharacterized protein (233 aa).

The protein belongs to the asfivirus H233R family.

This is an uncharacterized protein from African swine fever virus (isolate Tick/Malawi/Lil 20-1/1983) (ASFV).